A 447-amino-acid polypeptide reads, in one-letter code: uncharacterized protein (447 aa).

This is an uncharacterized protein from Mus musculus (Mouse).